Consider the following 109-residue polypeptide: Nucleoid-associated protein HI_0442 (109 aa).

This sequence belongs to the YbaB/EbfC family. Homodimer.

It localises to the cytoplasm. The protein localises to the nucleoid. Binds to DNA and alters its conformation. May be involved in regulation of gene expression, nucleoid organization and DNA protection. The sequence is that of Nucleoid-associated protein HI_0442 from Haemophilus influenzae (strain ATCC 51907 / DSM 11121 / KW20 / Rd).